A 531-amino-acid chain; its full sequence is tRNA(Ile)-lysidine synthase (531 aa).

32–37 (SGGMDS) provides a ligand contact to ATP.

Belongs to the tRNA(Ile)-lysidine synthase family.

It is found in the cytoplasm. It catalyses the reaction cytidine(34) in tRNA(Ile2) + L-lysine + ATP = lysidine(34) in tRNA(Ile2) + AMP + diphosphate + H(+). Functionally, ligates lysine onto the cytidine present at position 34 of the AUA codon-specific tRNA(Ile) that contains the anticodon CAU, in an ATP-dependent manner. Cytidine is converted to lysidine, thus changing the amino acid specificity of the tRNA from methionine to isoleucine. The polypeptide is tRNA(Ile)-lysidine synthase (Blochmanniella floridana).